Consider the following 116-residue polypeptide: MAGRSGDSEEELLKTVRLIKFLYQSNPPPKPEGTRQARRNRRRRWRERQRQIRSISGWILSNYLGRLAEPVPLQLPPLERLTLDCNEDCGTSGTQGVGSPQILVESPTVLESGTKE.

Phosphoserine; by host CK2 occurs at positions 5 and 8. Residues 18–26 (LIKFLYQSN) form a homomultimerization region. The interval 23 to 48 (YQSNPPPKPEGTRQARRNRRRRWRER) is disordered. The Nuclear localization signal and RNA-binding (RRE) motif lies at 34 to 50 (TRQARRNRRRRWRERQR). The segment covering 36 to 47 (QARRNRRRRWRE) has biased composition (basic residues). The Nuclear export signal and binding to XPO1 signature appears at 73-84 (LQLPPLERLTLD). Ser-92 and Ser-99 each carry phosphoserine; by host. Residues 92 to 116 (SGTQGVGSPQILVESPTVLESGTKE) form a disordered region.

The protein belongs to the HIV-1 REV protein family. In terms of assembly, homomultimer; when bound to the RRE. Multimeric assembly is essential for activity and may involve XPO1. Binds to human KPNB1, XPO1, TNPO1, RANBP5 and IPO7. Interacts with the viral Integrase. Interacts with human KHDRBS1. Interacts with human NAP1; this interaction decreases Rev multimerization and stimulates its activity. Interacts with human DEAD-box helicases DDX3 and DDX24; these interactions may serve for viral RNA export to the cytoplasm and packaging, respectively. Interacts with human PSIP1; this interaction may inhibit HIV-1 DNA integration by promoting dissociation of the Integrase-LEDGF/p75 complex. In terms of processing, asymmetrically arginine dimethylated at one site by host PRMT6. Methylation impairs the RNA-binding activity and export of viral RNA from the nucleus to the cytoplasm. Phosphorylated by protein kinase CK2. Presence of, and maybe binding to the N-terminus of the regulatory beta subunit of CK2 is necessary for CK2-mediated Rev's phosphorylation.

It localises to the host nucleus. The protein resides in the host nucleolus. It is found in the host cytoplasm. In terms of biological role, escorts unspliced or incompletely spliced viral pre-mRNAs (late transcripts) out of the nucleus of infected cells. These pre-mRNAs carry a recognition sequence called Rev responsive element (RRE) located in the env gene, that is not present in fully spliced viral mRNAs (early transcripts). This function is essential since most viral proteins are translated from unspliced or partially spliced pre-mRNAs which cannot exit the nucleus by the pathway used by fully processed cellular mRNAs. Rev itself is translated from a fully spliced mRNA that readily exits the nucleus. Rev's nuclear localization signal (NLS) binds directly to KPNB1/Importin beta-1 without previous binding to KPNA1/Importin alpha-1. KPNB1 binds to the GDP bound form of RAN (Ran-GDP) and targets Rev to the nucleus. In the nucleus, the conversion from Ran-GDP to Ran-GTP dissociates Rev from KPNB1 and allows Rev's binding to the RRE in viral pre-mRNAs. Rev multimerization on the RRE via cooperative assembly exposes its nuclear export signal (NES) to the surface. Rev can then form a complex with XPO1/CRM1 and Ran-GTP, leading to nuclear export of the complex. Conversion from Ran-GTP to Ran-GDP mediates dissociation of the Rev/RRE/XPO1/RAN complex, so that Rev can return to the nucleus for a subsequent round of export. Beside KPNB1, also seems to interact with TNPO1/Transportin-1, RANBP5/IPO5 and IPO7/RANBP7 for nuclear import. The nucleoporin-like HRB/RIP is an essential cofactor that probably indirectly interacts with Rev to release HIV RNAs from the perinuclear region to the cytoplasm. The sequence is that of Protein Rev from Human immunodeficiency virus type 1 group M subtype B (isolate SC) (HIV-1).